Consider the following 99-residue polypeptide: Aspartyl/glutamyl-tRNA(Asn/Gln) amidotransferase subunit C (99 aa).

It belongs to the GatC family. In terms of assembly, heterotrimer of A, B and C subunits.

It catalyses the reaction L-glutamyl-tRNA(Gln) + L-glutamine + ATP + H2O = L-glutaminyl-tRNA(Gln) + L-glutamate + ADP + phosphate + H(+). The catalysed reaction is L-aspartyl-tRNA(Asn) + L-glutamine + ATP + H2O = L-asparaginyl-tRNA(Asn) + L-glutamate + ADP + phosphate + 2 H(+). In terms of biological role, allows the formation of correctly charged Asn-tRNA(Asn) or Gln-tRNA(Gln) through the transamidation of misacylated Asp-tRNA(Asn) or Glu-tRNA(Gln) in organisms which lack either or both of asparaginyl-tRNA or glutaminyl-tRNA synthetases. The reaction takes place in the presence of glutamine and ATP through an activated phospho-Asp-tRNA(Asn) or phospho-Glu-tRNA(Gln). In Rhodococcus opacus (strain B4), this protein is Aspartyl/glutamyl-tRNA(Asn/Gln) amidotransferase subunit C.